The sequence spans 371 residues: DNA primase large subunit PriL (371 aa).

The [4Fe-4S] cluster site is built by Cys-230, Cys-301, Cys-310, and Cys-317. Residues 337 to 371 (EREKEEGKEKGNEEKKEKREEHEKKNEKGNEIKEK) form a disordered region.

This sequence belongs to the eukaryotic-type primase large subunit family. Heterodimer of a small subunit (PriS) and a large subunit (PriL). It depends on [4Fe-4S] cluster as a cofactor.

Regulatory subunit of DNA primase, an RNA polymerase that catalyzes the synthesis of short RNA molecules used as primers for DNA polymerase during DNA replication. Stabilizes and modulates the activity of the small subunit, increasing the rate of DNA synthesis, and conferring RNA synthesis capability. The DNA polymerase activity may enable DNA primase to also catalyze primer extension after primer synthesis. May also play a role in DNA repair. This Methanosarcina acetivorans (strain ATCC 35395 / DSM 2834 / JCM 12185 / C2A) protein is DNA primase large subunit PriL.